A 1153-amino-acid chain; its full sequence is AP-3 complex subunit delta-1 (1153 aa).

Alanine 2 is modified (N-acetylalanine). 11 HEAT repeats span residues 34–71, 77–114, 142–179, 180–216, 254–292, 299–336, 338–373, 375–409, 431–468, 497–535, and 548–585; these read KYIS…LGYD, FNII…LTTN, DLAR…KYPE, SLRP…RNPK, RLGK…SLSS, ASIQ…THPK, VQSH…KKNL, EIVK…QSNY, TRHG…SAHL, QEPH…SILQ, and AVTQ…IQKL. 2 disordered regions span residues 629-696 and 726-920; these read EPLS…YQDT and KLEE…PPES. Phosphoserine is present on residues serine 632, serine 634, serine 636, and serine 658. Basic and acidic residues predominate over residues 639–675; the sequence is ERPRAVFHEEEQRRPKHRPSEADEEELARRREARKQE. A coiled-coil region spans residues 659–679; that stretch reads EADEEELARRREARKQEQANN. A Phosphoserine modification is found at serine 688. A coiled-coil region spans residues 725–756; sequence VKLEEERRHRQKLEKDKRRKKRKEKEKKGKRR. Positions 726-740 are enriched in basic and acidic residues; sequence KLEEERRHRQKLEKD. Basic residues predominate over residues 741 to 758; sequence KRRKKRKEKEKKGKRRHS. A phosphoserine mark is found at serine 758 and serine 759. Threonine 762 is subject to Phosphothreonine. Residues serine 764, alanine 785, serine 788, lysine 828, and serine 829 each carry the phosphoserine modification. A compositionally biased stretch (acidic residues) spans 777–794; the sequence is VTEEMPENALPSDEDDKD. Residues 795-839 show a composition bias toward basic and acidic residues; that stretch reads PNDPYRALDIDLDKPLADSEKLPIQKHRNTETSKSPEKDVPMVEK. Basic residues-rich tracts occupy residues 840–853 and 863–879; these read KSKK…KHKE and EKEK…KHRK. Positions 845 to 869 form a coiled coil; the sequence is KKKEKKHKEKERDKEKKKEKEKKKS. Valine 931 is modified (phosphoserine).

This sequence belongs to the adaptor complexes large subunit family. AP-3 associates with the BLOC-1 complex. Adaptor protein complex 3 (AP-3) is a heterotetramer composed of two large adaptins (delta-type subunit AP3D1 and beta-type subunit AP3B1 or AP3B2), a medium adaptin (mu-type subunit AP3M1 or AP3M2) and a small adaptin (sigma-type subunit APS1 or AP3S2). Interacts with SLC30A2. Interacts with CLN3 (via dileucine motif); this interaction facilitates lysosomal targeting. Present in all adult tissues examined with the highest levels in skeletal muscle, heart, pancreas and testis.

The protein localises to the cytoplasm. It localises to the golgi apparatus membrane. In terms of biological role, part of the AP-3 complex, an adaptor-related complex which is not clathrin-associated. The complex is associated with the Golgi region as well as more peripheral structures. It facilitates the budding of vesicles from the Golgi membrane and may be directly involved in trafficking to lysosomes. Involved in process of CD8+ T-cell and NK cell degranulation. In concert with the BLOC-1 complex, AP-3 is required to target cargos into vesicles assembled at cell bodies for delivery into neurites and nerve terminals. This Homo sapiens (Human) protein is AP-3 complex subunit delta-1 (AP3D1).